A 963-amino-acid chain; its full sequence is Longitudinals lacking protein, isoforms J/P/Q/S/Z (963 aa).

The 66-residue stretch at 32-97 folds into the BTB domain; it reads VDCTLAAEGK…MYRGEVNISQ (66 aa). 4 disordered regions span residues 115-200, 228-340, 447-469, and 482-520; these read LSDN…SSVL, SSGP…ASAS, DAQQ…RIRV, and GKSS…VSTT. Low complexity-rich tracts occupy residues 162–175, 228–251, 263–293, and 329–340; these read SGDV…SSSP, SSGP…LTST, TSST…QTTS, and NSATGPNPASAS. Positions 491–512 are enriched in polar residues; that stretch reads KLTQSKKSLISDAKTTNKTSTP. The C2H2-type 1; degenerate zinc finger occupies 849–871; sequence WVCRNCNRTYKWKNSLKCHLKNE. Residues 878–901 form a C2H2-type 2; degenerate zinc finger; the sequence is YFCSKMCGYATNVHSNLKRHLNTK. The segment at 900-963 is disordered; the sequence is TKCRDREKDA…YTLVFQNDSA (64 aa). Residues 901 to 915 show a composition bias toward basic and acidic residues; the sequence is KCRDREKDADDEKKP. The segment covering 937-953 has biased composition (low complexity); sequence SSSNNNNNGGGSSTSST. Positions 954 to 963 are enriched in polar residues; sequence YTLVFQNDSA.

By stage 11, isoform Q, isoform P and isoform Z are expressed throughout the mesoderm. From stage 15, expression of isoform P expands to all tissues, whereas expression of isoform Z and isoform Q becomes restricted during later stages; starting from stage 14 to 16, isoform Z is expressed in muscle, and isoform Q and isoform Z are expressed in the CNS. For some isoforms, expression is also seen in specific types of cells in the embryo; isoform Z is expressed in the ventral furrow at stage 5, and isoform Q is expressed around the tracheal pits at stage 11. Isoform Z also shows transient enrichment in a dorsal cell layer in the CNS at stages 13 and 14.

Its subcellular location is the nucleus. Its function is as follows. Putative transcription factor required for axon growth and guidance in the central and peripheral nervous systems. Repels CNS axons away from the midline by promoting the expression of the midline repellent sli and its receptor robo. This Drosophila melanogaster (Fruit fly) protein is Longitudinals lacking protein, isoforms J/P/Q/S/Z.